An 88-amino-acid chain; its full sequence is Small ribosomal subunit protein uS15c (88 aa).

It belongs to the universal ribosomal protein uS15 family. As to quaternary structure, part of the 30S ribosomal subunit.

The protein localises to the plastid. The protein resides in the chloroplast. In Capsella bursa-pastoris (Shepherd's purse), this protein is Small ribosomal subunit protein uS15c (rps15).